The primary structure comprises 440 residues: Transposon Ty1-DR1 Gag polyprotein (440 aa).

Polar residues-rich tracts occupy residues 1 to 10, 48 to 60, and 127 to 152; these read MESQQLSNYP, TKAN…TPAS, and QSQF…GNTF. Disordered stretches follow at residues 1-93, 126-173, and 352-440; these read MESQ…MMTQ, PQSQ…RPPP, and GSRN…PGTY. The span at 153–165 shows a compositional bias: low complexity; it reads TDSSSADSDMTST. The tract at residues 299-401 is RNA-binding; sequence NNGIHINNKV…NSKSKTARAH (103 aa). Low complexity predominate over residues 402–418; sequence NVSTSNNSPSTDNDSIS. Phosphoserine is present on S416. Positions 419-428 are enriched in polar residues; the sequence is KSTTEPIQLN. Residues 429–440 are compositionally biased toward basic and acidic residues; it reads NKHDLHLRPGTY.

As to quaternary structure, homotrimer.

It localises to the cytoplasm. Functionally, capsid protein (CA) is the structural component of the virus-like particle (VLP), forming the shell that encapsulates the retrotransposons dimeric RNA genome. The particles are assembled from trimer-clustered units and there are holes in the capsid shells that allow for the diffusion of macromolecules. CA also has nucleocapsid-like chaperone activity, promoting primer tRNA(i)-Met annealing to the multipartite primer-binding site (PBS), dimerization of Ty1 RNA and initiation of reverse transcription. The chain is Transposon Ty1-DR1 Gag polyprotein (TY1A-DR1) from Saccharomyces cerevisiae (strain ATCC 204508 / S288c) (Baker's yeast).